Here is a 156-residue protein sequence, read N- to C-terminus: E3 ubiquitin-protein ligase RNF181 (156 aa).

Residues Cys-79–Arg-120 form an RING-type; atypical zinc finger.

The protein belongs to the RNF181 family.

It catalyses the reaction S-ubiquitinyl-[E2 ubiquitin-conjugating enzyme]-L-cysteine + [acceptor protein]-L-lysine = [E2 ubiquitin-conjugating enzyme]-L-cysteine + N(6)-ubiquitinyl-[acceptor protein]-L-lysine.. Its pathway is protein modification; protein ubiquitination. Its function is as follows. E3 ubiquitin-protein ligase which accepts ubiquitin from an E2 ubiquitin-conjugating enzyme in the form of a thioester and then directly transfers the ubiquitin to targeted substrates. Catalyzes monoubiquitination of 26S proteasome subunit PSMC2/RPT1. The polypeptide is E3 ubiquitin-protein ligase RNF181 (rnf181) (Xenopus laevis (African clawed frog)).